An 84-amino-acid polypeptide reads, in one-letter code: U21-theraphotoxin-Cg1a 3 (84 aa).

The signal sequence occupies residues 1 to 21; the sequence is MKVSVLITLAVLGVMFLLTSA. The propeptide occupies 22 to 47; the sequence is EERGSDQMDSPAWLKSMERIFQSEER. 3 cysteine pairs are disulfide-bonded: Cys49/Cys63, Cys56/Cys68, and Cys62/Cys76. Val82 is modified (valine amide).

It belongs to the neurotoxin 10 (Hwtx-1) family. 05 (F4a) subfamily. As to expression, expressed by the venom gland.

It localises to the secreted. Functionally, probable ion channel inhibitor. The protein is U21-theraphotoxin-Cg1a 3 of Chilobrachys guangxiensis (Chinese earth tiger tarantula).